The primary structure comprises 346 residues: Elongation factor 1-alpha (346 aa).

The region spanning 1–127 is the tr-type G domain; it reads GTSQADVALL…DNVEPPKRPS (127 aa). 49–52 contributes to the GTP binding site; sequence NKMD.

It belongs to the TRAFAC class translation factor GTPase superfamily. Classic translation factor GTPase family. EF-Tu/EF-1A subfamily.

It is found in the cytoplasm. Its function is as follows. This protein promotes the GTP-dependent binding of aminoacyl-tRNA to the A-site of ribosomes during protein biosynthesis. This Eimeria bovis protein is Elongation factor 1-alpha.